The sequence spans 341 residues: S-adenosylmethionine:tRNA ribosyltransferase-isomerase (341 aa).

The protein belongs to the QueA family. In terms of assembly, monomer.

Its subcellular location is the cytoplasm. It catalyses the reaction 7-aminomethyl-7-carbaguanosine(34) in tRNA + S-adenosyl-L-methionine = epoxyqueuosine(34) in tRNA + adenine + L-methionine + 2 H(+). It functions in the pathway tRNA modification; tRNA-queuosine biosynthesis. Functionally, transfers and isomerizes the ribose moiety from AdoMet to the 7-aminomethyl group of 7-deazaguanine (preQ1-tRNA) to give epoxyqueuosine (oQ-tRNA). The sequence is that of S-adenosylmethionine:tRNA ribosyltransferase-isomerase from Chlorobium phaeovibrioides (strain DSM 265 / 1930) (Prosthecochloris vibrioformis (strain DSM 265)).